The chain runs to 305 residues: MIVTPASIKALMTSWRKDFQGGLEDAPSQYNKIAMVVNSSTRSNTYGWLGKFPTLKEWVGKRTIQQMEAHGYSIANKTFEGTVGISRDDFEDDNLGIYAPIFQEMGRSAAVQPDELIFKLLKDGFTQPCYDGQNFFDKEHPVYPNVDGTGSAVNTSNIVEQDSFSGLPFYLLDCSRAVKPLIFQERRKPELVARTRIDDDHVFMDNEFLFGASTRRAAGYGFWQMAVAVKGDLTLDNLWKGWQLMRSFEGDGGKKLGLKPTHIVVPVGLEKAAEQLLNRELFADGNTTVSNEMKGKLQLVVADYL.

In terms of assembly, part of the immature prohead complex. Interaction between the viral portal protein and the viral protease I may give rise to an early 25S initiator complex. The scaffolding protein Z and the capsid protein T should then be added to the initiator complex to yield immature procapsid. Host GroEL and GroES are also essential for the correct assembly of viral capsids.

The protein localises to the virion. Its subcellular location is the host cytoplasm. Its function is as follows. Capsid protein that self-assembles to form an icosahedral capsid, about 54 nm in diameter. In Escherichia phage Mu (Bacteriophage Mu), this protein is Major capsid protein (T).